The following is a 113-amino-acid chain: C-C motif chemokine 15 (113 aa).

The first 21 residues, 1 to 21, serve as a signal peptide directing secretion; the sequence is MKVSVAALSCLMLVAVLGSQA. Disulfide bonds link Cys-53–Cys-77, Cys-54–Cys-93, and Cys-64–Cys-104.

Belongs to the intercrine beta (chemokine CC) family. Monomer. Post-translationally, the N-terminal is proteolytically cleaved by proteases associated with inflammatory responses. The processed forms CCL15(22-92), CCL15(25-92) and CCL15(29-92) exhibit increase in CCR1-mediated signaling and chemotaxis assays in vitro. As to expression, most abundant in heart, skeletal muscle and adrenal gland. Lower levels in placenta, liver, pancreas and bone marrow. CCL15(22-92), CCL15(25-92) and CCL15(29-92) are found in high levels in synovial fluids from rheumatoid patients.

It is found in the secreted. Chemotactic factor that attracts T-cells and monocytes, but not neutrophils, eosinophils, or B-cells. Acts mainly via CC chemokine receptor CCR1. Also binds to CCR3. CCL15(22-92), CCL15(25-92) and CCL15(29-92) are more potent chemoattractants than the CCL15. The polypeptide is C-C motif chemokine 15 (CCL15) (Homo sapiens (Human)).